A 415-amino-acid chain; its full sequence is 3-isopropylmalate dehydratase large subunit (415 aa).

Cys-297, Cys-355, and Cys-358 together coordinate [4Fe-4S] cluster.

Belongs to the aconitase/IPM isomerase family. LeuC type 2 subfamily. In terms of assembly, heterodimer of LeuC and LeuD. The cofactor is [4Fe-4S] cluster.

The enzyme catalyses (2R,3S)-3-isopropylmalate = (2S)-2-isopropylmalate. Its pathway is amino-acid biosynthesis; L-leucine biosynthesis; L-leucine from 3-methyl-2-oxobutanoate: step 2/4. Its function is as follows. Catalyzes the isomerization between 2-isopropylmalate and 3-isopropylmalate, via the formation of 2-isopropylmaleate. This is 3-isopropylmalate dehydratase large subunit from Metallosphaera sedula (strain ATCC 51363 / DSM 5348 / JCM 9185 / NBRC 15509 / TH2).